Reading from the N-terminus, the 399-residue chain is Bombesin receptor subtype-3 (399 aa).

Topologically, residues 1-41 (MSQRQSQSPNQTLISITNDTETSSSVVSNDTTHKGWTGDNS) are extracellular. Residues asparagine 10, asparagine 18, and asparagine 29 are each glycosylated (N-linked (GlcNAc...) asparagine). A helical transmembrane segment spans residues 42–63 (PGIEALCAIYITYAGIISVGIL). The Cytoplasmic portion of the chain corresponds to 64–82 (GNAILIKVFFKTKSMQTVP). Residues 83–103 (NIFITSLAFGDLLLLLTCVPV) form a helical membrane-spanning segment. At 104 to 121 (DATHYLAEGWLFGKVGCK) the chain is on the extracellular side. A disulfide bridge connects residues cysteine 120 and cysteine 203. The chain crosses the membrane as a helical span at residues 122 to 143 (VLSFIRLTSVGVSVFTLTILSA). The Cytoplasmic segment spans residues 144 to 163 (DRYKAVVKPLERQPPNAILK). The chain crosses the membrane as a helical span at residues 164–184 (TCAKAGGIWIVSMIFALPEAI). Over 185–220 (FSNVYTFQDPNRNVTFESCNSYPISERLLQEIHSLL) the chain is Extracellular. Residues 221 to 241 (CFLVFYIIPLSIISVYYSLIA) traverse the membrane as a helical segment. Over 242-272 (RTLYKSTLNIPTEEQSHARKQIESRKRIAKT) the chain is Cytoplasmic. Residues 273-293 (VLVLVALFALCWLPNHLLYLY) form a helical membrane-spanning segment. Over 294-313 (HSFTYESYANHSDVPFVIII) the chain is Extracellular. A helical membrane pass occupies residues 314–333 (FSRVLAFSNSCVNPFALYWL). Residues 334–399 (SKTFQQHFKA…SSAKKGEDKV (66 aa)) lie on the Cytoplasmic side of the membrane. Residue cysteine 347 is the site of S-palmitoyl cysteine attachment.

The protein belongs to the G-protein coupled receptor 1 family. Interacts with C6orf89.

The protein resides in the cell membrane. In terms of biological role, role in sperm cell division, maturation, or function. This receptor mediates its action by association with G proteins that activate a phosphatidylinositol-calcium second messenger system. The protein is Bombesin receptor subtype-3 (Brs3) of Mus musculus (Mouse).